A 151-amino-acid chain; its full sequence is Deoxyuridine 5'-triphosphate nucleotidohydrolase (151 aa).

Substrate is bound by residues 70–72 (RSG), N83, 87–89 (LID), and M97.

The protein belongs to the dUTPase family. Mg(2+) is required as a cofactor.

The enzyme catalyses dUTP + H2O = dUMP + diphosphate + H(+). Its pathway is pyrimidine metabolism; dUMP biosynthesis; dUMP from dCTP (dUTP route): step 2/2. In terms of biological role, this enzyme is involved in nucleotide metabolism: it produces dUMP, the immediate precursor of thymidine nucleotides and it decreases the intracellular concentration of dUTP so that uracil cannot be incorporated into DNA. The protein is Deoxyuridine 5'-triphosphate nucleotidohydrolase of Pseudomonas aeruginosa (strain LESB58).